A 284-amino-acid polypeptide reads, in one-letter code: Actin-like protein ARP10 (284 aa).

The protein belongs to the actin family. ARP10 subfamily. Self-associates. Component of the dynactin complex composed of at least ARP1, JNM1, NIP100 and ARP10. Dynactin comprises a short rod of the ARP1 filament attached to ARP10 at its pointed-end and probably associated with the capping protein at its barbed-end. The rod is implicated in dynein cargo binding. A sidearm formed by NIP100 projects from the ARP1 filament and is implicated in motor binding. Interacts with ARP1 and JNM1.

The protein localises to the cytoplasm. Its subcellular location is the cytoskeleton. Its function is as follows. Pointed-end-associated component of the dynactin complex which assists cytoplasmic dynein by increasing its processivity and by regulation of its cargo binding. The dynactin complex is required for the spindle translocation late in anaphase and is involved in a cell wall synthesis checkpoint. May regulate the association of the dynactin complex with the plasma membrane. The sequence is that of Actin-like protein ARP10 (ARP10) from Saccharomyces cerevisiae (strain ATCC 204508 / S288c) (Baker's yeast).